Here is a 381-residue protein sequence, read N- to C-terminus: Cytosolic acyl coenzyme A thioester hydrolase (381 aa).

Residues 51 to 169 (PGHCIAMGRI…TLWYVPLSLK (119 aa)) form the HotDog ACOT-type 1 domain. Residue asparagine 67 is part of the active site. N6-acetyllysine occurs at positions 169 and 199. In terms of domain architecture, HotDog ACOT-type 2 spans 225-339 (SYSQSSLIHL…FFTYVSLNQE (115 aa)). Aspartate 256 is a catalytic residue. Lysine 284 bears the N6-acetyllysine mark. Residues 343-381 (LPVPQLVPETEDEKKRFEEGKGRYLQMKAKRQGHTEPQP) are disordered. The span at 354–364 (DEKKRFEEGKG) shows a compositional bias: basic and acidic residues.

In terms of assembly, homohexamer. Post-translationally, the N-terminus is blocked. Isoform 1 is expressed constitutively in brain and testis. Isoform 2 is induced in liver by treatment with the peroxisome proliferator.

Its subcellular location is the cytoplasm. It localises to the cytosol. The catalysed reaction is hexadecanoyl-CoA + H2O = hexadecanoate + CoA + H(+). It carries out the reaction dodecanoyl-CoA + H2O = dodecanoate + CoA + H(+). It catalyses the reaction tetradecanoyl-CoA + H2O = tetradecanoate + CoA + H(+). The enzyme catalyses decanoyl-CoA + H2O = decanoate + CoA + H(+). The catalysed reaction is octanoyl-CoA + H2O = octanoate + CoA + H(+). It carries out the reaction octadecanoyl-CoA + H2O = octadecanoate + CoA + H(+). It catalyses the reaction (9Z)-octadecenoyl-CoA + H2O = (9Z)-octadecenoate + CoA + H(+). It functions in the pathway lipid metabolism; fatty acid metabolism. Its function is as follows. Catalyzes the hydrolysis of acyl-CoAs into free fatty acids and coenzyme A (CoASH), regulating their respective intracellular levels. Preferentially hydrolyzes palmitoyl-CoA, but has a broad specificity acting on other fatty acyl-CoAs with chain-lengths of C8-C18. May play an important physiological function in brain. This chain is Cytosolic acyl coenzyme A thioester hydrolase (Acot7), found in Rattus norvegicus (Rat).